The chain runs to 156 residues: MEDKMSQMESSIETIINIFHQYSVRLGHYDTLIQKEFKQLVQKELPNFLKKQKKNEAAINEIMEDLDTNVDKQLSFEEFIMLVARLTVASHEEMHNTAPPGQGHRHGPGYGKGGSGSCSGQGSPDQGSHDLGSHGHGHGHSHGGHGHSHGGHGHSH.

EF-hand domains lie at 16 to 51 (INIF…FLKK) and 54 to 89 (KNEA…LTVA). H20 serves as a coordination point for Zn(2+). Positions 23, 26, and 28 each coordinate Ca(2+). D30 is a Zn(2+) binding site. Residues T31, E36, D67, N69, D71, Q73, and E78 each coordinate Ca(2+). H91 and H95 together coordinate Zn(2+). The tract at residues 94-156 (MHNTAPPGQG…HSHGGHGHSH (63 aa)) is disordered. A Pros-methylhistidine modification is found at H106. The segment covering 108-119 (PGYGKGGSGSCS) has biased composition (gly residues). Positions 135 to 156 (GHGHGHSHGGHGHSHGGHGHSH) are enriched in basic residues.

This sequence belongs to the S-100 family. In terms of assembly, homodimer. Preferentially exists as a heterodimer or heterotetramer with S100A8 known as calprotectin (S100A8/A9). S100A9 interacts with ATP2A2. S100A9 interacts with AGER, and with the heterodimeric complex formed by TLR4 and LY96 in the presence of calcium and/or zinc ions. S100A9 binds quinoline-3-carboxamides in the presence of calcium and/or zinc ions. S100A9 interacts with amyloid-beta protein 40. Calprotectin (S100A8/9) interacts with CEACAM3 and tubulin filaments in a calcium-dependent manner. Heterotetrameric calprotectin (S100A8/A9) interacts with ANXA6 and associates with tubulin filaments in activated monocytes. Calprotectin (S100A8/9) interacts with NCF2/P67PHOX, RAC1, RAC2, CYBA and CYBB. Calprotectin (S100A8/9) interacts with NOS2 to form the iNOS-S100A8/A9 transnitrosylase complex; induced by LDL(ox). Calprotectin (S100A8/9) interacts with CD69. In terms of processing, phosphorylated. Phosphorylation inhibits activation of tubulin polymerization. Post-translationally, methylation at His-106 by METTL9 reduces zinc-binding without affecting heterodimerization with S100A8. In terms of tissue distribution, found essentially in phagocytic cells.

The protein localises to the secreted. Its subcellular location is the cytoplasm. It localises to the cytoskeleton. The protein resides in the cell membrane. Functionally, S100A9 is a calcium- and zinc-binding protein which plays a prominent role in the regulation of inflammatory processes and immune response. It can induce neutrophil chemotaxis, adhesion, can increase the bactericidal activity of neutrophils by promoting phagocytosis via activation of SYK, PI3K/AKT, and ERK1/2 and can induce degranulation of neutrophils by a MAPK-dependent mechanism. Predominantly found as calprotectin (S100A8/A9) which has a wide plethora of intra- and extracellular functions. The intracellular functions include: facilitating leukocyte arachidonic acid trafficking and metabolism, modulation of the tubulin-dependent cytoskeleton during migration of phagocytes and activation of the neutrophilic NADPH-oxidase. Also participates in regulatory T-cell differentiation together with CD69. Activates NADPH-oxidase by facilitating the enzyme complex assembly at the cell membrane, transferring arachidonic acid, an essential cofactor, to the enzyme complex and S100A8 contributes to the enzyme assembly by directly binding to NCF2/P67PHOX. The extracellular functions involve pro-inflammatory, antimicrobial, oxidant-scavenging and apoptosis-inducing activities. Its pro-inflammatory activity includes recruitment of leukocytes, promotion of cytokine and chemokine production, and regulation of leukocyte adhesion and migration. Acts as an alarmin or a danger associated molecular pattern (DAMP) molecule and stimulates innate immune cells via binding to pattern recognition receptors such as Toll-like receptor 4 (TLR4) and receptor for advanced glycation endproducts (AGER). Binding to TLR4 and AGER activates the MAP-kinase and NF-kappa-B signaling pathways resulting in the amplification of the pro-inflammatory cascade. Has antimicrobial activity towards bacteria and fungi and exerts its antimicrobial activity probably via chelation of Zn(2+) which is essential for microbial growth. Can induce cell death via autophagy and apoptosis and this occurs through the cross-talk of mitochondria and lysosomes via reactive oxygen species (ROS) and the process involves BNIP3. Can regulate neutrophil number and apoptosis by an anti-apoptotic effect; regulates cell survival via ITGAM/ITGB and TLR4 and a signaling mechanism involving MEK-ERK. Its role as an oxidant scavenger has a protective role in preventing exaggerated tissue damage by scavenging oxidants. The iNOS-S100A8/A9 transnitrosylase complex is proposed to direct selective inflammatory stimulus-dependent S-nitrosylation of multiple targets such as GAPDH, NXA5, EZR, MSN and VIM by recognizing a [IL]-x-C-x-x-[DE] motif. In Bos taurus (Bovine), this protein is Protein S100-A9 (S100A9).